Consider the following 126-residue polypeptide: Large ribosomal subunit protein bL12 (126 aa).

It belongs to the bacterial ribosomal protein bL12 family. Homodimer. Part of the ribosomal stalk of the 50S ribosomal subunit. Forms a multimeric L10(L12)X complex, where L10 forms an elongated spine to which 2 to 4 L12 dimers bind in a sequential fashion. Binds GTP-bound translation factors.

Its function is as follows. Forms part of the ribosomal stalk which helps the ribosome interact with GTP-bound translation factors. Is thus essential for accurate translation. The protein is Large ribosomal subunit protein bL12 of Legionella pneumophila (strain Paris).